A 228-amino-acid chain; its full sequence is ATP synthase subunit beta, mitochondrial (228 aa).

Residues Met1–Lys31 constitute a mitochondrion transit peptide. Residue Gly183–Thr190 participates in ATP binding.

It belongs to the ATPase alpha/beta chains family. F-type ATPases have 2 components, CF(1) - the catalytic core - and CF(0) - the membrane proton channel. CF(1) has five subunits: alpha(3), beta(3), gamma(1), delta(1), epsilon(1). CF(0) has three main subunits: a, b and c.

The protein resides in the mitochondrion. The protein localises to the mitochondrion inner membrane. It carries out the reaction ATP + H2O + 4 H(+)(in) = ADP + phosphate + 5 H(+)(out). Functionally, mitochondrial membrane ATP synthase (F(1)F(0) ATP synthase or Complex V) produces ATP from ADP in the presence of a proton gradient across the membrane which is generated by electron transport complexes of the respiratory chain. F-type ATPases consist of two structural domains, F(1) - containing the extramembraneous catalytic core, and F(0) - containing the membrane proton channel, linked together by a central stalk and a peripheral stalk. During catalysis, ATP synthesis in the catalytic domain of F(1) is coupled via a rotary mechanism of the central stalk subunits to proton translocation. Subunits alpha and beta form the catalytic core in F(1). Rotation of the central stalk against the surrounding alpha(3)beta(3) subunits leads to hydrolysis of ATP in three separate catalytic sites on the beta subunits. This Drosophila virilis (Fruit fly) protein is ATP synthase subunit beta, mitochondrial.